We begin with the raw amino-acid sequence, 179 residues long: Large ribosomal subunit protein uL5 (179 aa).

This sequence belongs to the universal ribosomal protein uL5 family. As to quaternary structure, part of the 50S ribosomal subunit; part of the 5S rRNA/L5/L18/L25 subcomplex. Contacts the 5S rRNA and the P site tRNA. Forms a bridge to the 30S subunit in the 70S ribosome.

This is one of the proteins that bind and probably mediate the attachment of the 5S RNA into the large ribosomal subunit, where it forms part of the central protuberance. In the 70S ribosome it contacts protein S13 of the 30S subunit (bridge B1b), connecting the 2 subunits; this bridge is implicated in subunit movement. Contacts the P site tRNA; the 5S rRNA and some of its associated proteins might help stabilize positioning of ribosome-bound tRNAs. This chain is Large ribosomal subunit protein uL5, found in Marinomonas sp. (strain MWYL1).